The sequence spans 197 residues: Imidazoleglycerol-phosphate dehydratase (197 aa).

Belongs to the imidazoleglycerol-phosphate dehydratase family.

The protein localises to the cytoplasm. It carries out the reaction D-erythro-1-(imidazol-4-yl)glycerol 3-phosphate = 3-(imidazol-4-yl)-2-oxopropyl phosphate + H2O. The protein operates within amino-acid biosynthesis; L-histidine biosynthesis; L-histidine from 5-phospho-alpha-D-ribose 1-diphosphate: step 6/9. The protein is Imidazoleglycerol-phosphate dehydratase of Pseudomonas entomophila (strain L48).